The sequence spans 832 residues: MGSSLRSFIKDVRGAKTLADERAIITKQSAKIRTKLRDDHLPHEKRRVNIQKLLYLYILGEKTHFGQVESINLIASDDFVDKRLGYLAATLLLDESEDLLTLLTNMLNNDLHHPNKYAVSLALTSLGFLSSPELARDLYPDVENIIKNSRDPFLLKKALQCAAKLIFKDVSLLEIFNIEDITKILSSHSICTHGVLLGVTKIIQSILLIGLNRKKDEDEDEDGIDYSNDILSPLSLLLRDFFIRLENMNSKNIEPGYDVQGICDPFLQCEIIYTLKLYFQVGELLNSNNVLDYKDNFCDLLTRIATNTDSTKNSGQAILYETVKTIFSLDLNQPLRVLGINILAKFLAGKDNNTKYVSLNTLLKVVPQEPTAVQRHRKFISHCLQDTDVSIRMRALELSFAILDDSNLVELVNELMKFLAKQDEDSKDLIIYTIDHLIDTFDTRVVKDESWKLDVFFNILKLVGSFINYEKINDILIIINNTSQLSDKSEFLRKMLTISLNGTSAEISEENIGWQLVLIWCIGEYGDLVLNEGNKNGADIINESSITDYLLTLQELYTATNLKIINYILTAALKLSVRFHDAKNIEKLRQLILSYTDSTDLSLQMKSNQYEIFFNQSISVKKIILETMPKFEKITEEQDNGKALSKNLISNEPVDLLSDLLGEDSKAESKASTGDNVKPIDILEEIFGEKNDIAQVPKNANKEESINHSSAVEANSGVTLPLDANKIYDSSSLNVYASLLSANSGLAHLDLYFQAKSLISDLKTFCAVPKAQKLTLGQLYPSSTINASQICKQSLKISGSGKLKLRVKLDFHLNGSSSITNEQFDHKFDETL.

Positions 733–832 constitute a GAE domain; the sequence is LNVYASLLSA…QFDHKFDETL (100 aa).

In terms of assembly, adapter protein complex 1 (AP-1) is a heterotetramer composed of two large adaptins (gamma-type subunit APL4 and beta-type subunit APL2), a medium adaptin (mu-type subunit APM1) and a small adaptin (sigma-type subunit APS1). AP-1 interacts with clathrin. Also a component of the AP-1R complex composed of at least APM2, APL4 and APS1.

It localises to the cytoplasm. Its subcellular location is the golgi apparatus membrane. It is found in the cytoplasmic vesicle. The protein localises to the clathrin-coated vesicle membrane. Its function is as follows. Adaptins are components of the adapter complexes which link clathrin to receptors in coated vesicles. Clathrin-associated protein complexes are believed to interact with the cytoplasmic tails of membrane proteins, leading to their selection and concentration. The AP-1 complex interacts directly with clathrin. Component of the AP-1-related (AP-1R) complex, an adapter protein complex that mediates sorting of cargo SNARE SNC1. In contrast to the APM1-containing AP-1 complex, AP-1R is incapable of sorting CHS3. This chain is AP-1 complex subunit gamma-1 (APL4), found in Saccharomyces cerevisiae (strain ATCC 204508 / S288c) (Baker's yeast).